Consider the following 100-residue polypeptide: ATP-dependent Clp protease adapter protein ClpS (100 aa).

The protein belongs to the ClpS family. In terms of assembly, binds to the N-terminal domain of the chaperone ClpA.

Its function is as follows. Involved in the modulation of the specificity of the ClpAP-mediated ATP-dependent protein degradation. In Corynebacterium glutamicum (strain R), this protein is ATP-dependent Clp protease adapter protein ClpS.